A 1111-amino-acid polypeptide reads, in one-letter code: Lysylphosphatidylglycerol biosynthesis bifunctional protein LysX (1111 aa).

The tract at residues 1 to 612 is phosphatidylglycerol lysyltransferase; it reads MTLTSPPRTR…VLHHDGTAPD (612 aa). 7 helical membrane passes run 18–38, 60–80, 84–104, 118–138, 152–172, 209–229, and 308–328; these read VPAAAGWTVGVIATLSLIASV, FPDTSFAWAFVLALLAGALAA, IAWWILLLYMVAAVGWNVADL, VIGLAFHLAAVAFLLLARPLF, GVLAAGMAVGVLVGWGLLELF, VNALLGLFGALALMAAAIVLF, and AWLALCGTYGWAPGVMGASVG. The interval 613-1111 is lysine--tRNA ligase; the sequence is MSGLRTDTAD…TLPFPLARPR (499 aa). The segment at residues 674–747 is a DNA-binding region (OB); it reads VAGRVLRIRD…GTRSLLVRHW (74 aa). Positions 1023 and 1030 each coordinate Mg(2+).

It in the N-terminal section; belongs to the LPG synthetase family. In the C-terminal section; belongs to the class-II aminoacyl-tRNA synthetase family. Mg(2+) is required as a cofactor.

It is found in the cell membrane. The catalysed reaction is tRNA(Lys) + L-lysine + ATP = L-lysyl-tRNA(Lys) + AMP + diphosphate. It carries out the reaction L-lysyl-tRNA(Lys) + a 1,2-diacyl-sn-glycero-3-phospho-(1'-sn-glycerol) = a 1,2-diacyl-sn-glycero-3-phospho-1'-(3'-O-L-lysyl)-sn-glycerol + tRNA(Lys). In terms of biological role, catalyzes the production of L-lysyl-tRNA(Lys)transfer and the transfer of a lysyl group from L-lysyl-tRNA(Lys) to membrane-bound phosphatidylglycerol (PG), which produces lysylphosphatidylglycerol (LPG), one of the components of the bacterial membrane with a positive net charge. LPG synthesis contributes to the resistance to cationic antimicrobial peptides (CAMPs) and likely protects M.tuberculosis against the CAMPs produced by competiting microorganisms (bacteriocins). In fact, the modification of anionic phosphatidylglycerol with positively charged L-lysine results in repulsion of the peptides. The protein is Lysylphosphatidylglycerol biosynthesis bifunctional protein LysX (lysX) of Mycobacterium sp. (strain JLS).